The following is a 92-amino-acid chain: Large ribosomal subunit protein bL25 (92 aa).

The protein belongs to the bacterial ribosomal protein bL25 family. As to quaternary structure, part of the 50S ribosomal subunit; part of the 5S rRNA/L5/L18/L25 subcomplex. Contacts the 5S rRNA. Binds to the 5S rRNA independently of L5 and L18.

Functionally, this is one of the proteins that binds to the 5S RNA in the ribosome where it forms part of the central protuberance. This is Large ribosomal subunit protein bL25 from Vibrio campbellii (strain ATCC BAA-1116).